Consider the following 273-residue polypeptide: MTVLHSIDFFSSSSAPVAIEARAPQSAFPEHHHDFYEIVIVEEGAGVHVFNGNPYTLSRGCVCFVRDHDRHLFESTDDLFLTNVLFRAPDAFRFLSGVGHFLPRECDGVYPSHWRVNGQVLQQIKCLIACLEHAPKSDQVEDIALHESVFMQLLVKLWQGCQTQVGDDQEGRLYQLLDWLQNNYSEAVEWPELADRFALPLRTLHRQLKNKTGMTPQRYLTRLHLLQARHQLCYSDNSVTDIAYLCGFGDSNHFSTLFKREFSQSPRDLRSQL.

The HTH araC/xylS-type domain occupies 174–272 (YQLLDWLQNN…SQSPRDLRSQ (99 aa)). 2 DNA-binding regions (H-T-H motif) span residues 191-212 (PELA…KNKT) and 239-262 (VTDI…KREF).

As to quaternary structure, binds DNA as a dimer.

It localises to the cytoplasm. Its function is as follows. Activates expression of the rhaBAD and rhaT operons. This Yersinia pestis bv. Antiqua (strain Antiqua) protein is HTH-type transcriptional activator RhaS.